A 190-amino-acid chain; its full sequence is Threonylcarbamoyl-AMP synthase (190 aa).

The YrdC-like domain maps to 7–190; the sequence is GDAIAAAIDV…ALTGELFRQG (184 aa).

It belongs to the SUA5 family. TsaC subfamily.

It localises to the cytoplasm. The catalysed reaction is L-threonine + hydrogencarbonate + ATP = L-threonylcarbamoyladenylate + diphosphate + H2O. Its function is as follows. Required for the formation of a threonylcarbamoyl group on adenosine at position 37 (t(6)A37) in tRNAs that read codons beginning with adenine. Catalyzes the conversion of L-threonine, HCO(3)(-)/CO(2) and ATP to give threonylcarbamoyl-AMP (TC-AMP) as the acyladenylate intermediate, with the release of diphosphate. The sequence is that of Threonylcarbamoyl-AMP synthase from Shigella flexneri.